We begin with the raw amino-acid sequence, 248 residues long: Probable transcriptional regulatory protein Ecaj_0351 (248 aa).

The segment at Met1–Arg21 is disordered.

This sequence belongs to the TACO1 family.

The protein localises to the cytoplasm. In Ehrlichia canis (strain Jake), this protein is Probable transcriptional regulatory protein Ecaj_0351.